We begin with the raw amino-acid sequence, 267 residues long: 4-hydroxy-tetrahydrodipicolinate reductase (267 aa).

Position 10–15 (10–15 (GANGRM)) interacts with NAD(+). R37 contributes to the NADP(+) binding site. Residues 98–100 (GTT) and 122–125 (ARNY) each bind NAD(+). H155 serves as the catalytic Proton donor/acceptor. H156 provides a ligand contact to (S)-2,3,4,5-tetrahydrodipicolinate. K159 functions as the Proton donor in the catalytic mechanism. Position 165–166 (165–166 (GT)) interacts with (S)-2,3,4,5-tetrahydrodipicolinate.

The protein belongs to the DapB family.

The protein localises to the cytoplasm. It carries out the reaction (S)-2,3,4,5-tetrahydrodipicolinate + NAD(+) + H2O = (2S,4S)-4-hydroxy-2,3,4,5-tetrahydrodipicolinate + NADH + H(+). It catalyses the reaction (S)-2,3,4,5-tetrahydrodipicolinate + NADP(+) + H2O = (2S,4S)-4-hydroxy-2,3,4,5-tetrahydrodipicolinate + NADPH + H(+). It participates in amino-acid biosynthesis; L-lysine biosynthesis via DAP pathway; (S)-tetrahydrodipicolinate from L-aspartate: step 4/4. Functionally, catalyzes the conversion of 4-hydroxy-tetrahydrodipicolinate (HTPA) to tetrahydrodipicolinate. The polypeptide is 4-hydroxy-tetrahydrodipicolinate reductase (Pseudoalteromonas translucida (strain TAC 125)).